Consider the following 133-residue polypeptide: Large ribosomal subunit protein eL32z (133 aa).

Belongs to the eukaryotic ribosomal protein eL32 family.

The sequence is that of Large ribosomal subunit protein eL32z (RPL32A) from Arabidopsis thaliana (Mouse-ear cress).